Consider the following 123-residue polypeptide: MPTINQLIRKERKKVVKRKKTPALQACPQRRGVCTRVYTTTPKKPNSALRKVARVRLTNGLEVTAYIPGEGHNLQEHSVVMIRGGRVKDLPGVRYHIVRGTLDTSGVQDRRQGRSKYGAKRPK.

Asp89 is modified (3-methylthioaspartic acid). Residues 103–123 (DTSGVQDRRQGRSKYGAKRPK) form a disordered region. A compositionally biased stretch (basic residues) spans 113–123 (GRSKYGAKRPK).

Belongs to the universal ribosomal protein uS12 family. In terms of assembly, part of the 30S ribosomal subunit. Contacts proteins S8 and S17. May interact with IF1 in the 30S initiation complex.

Its function is as follows. With S4 and S5 plays an important role in translational accuracy. Functionally, interacts with and stabilizes bases of the 16S rRNA that are involved in tRNA selection in the A site and with the mRNA backbone. Located at the interface of the 30S and 50S subunits, it traverses the body of the 30S subunit contacting proteins on the other side and probably holding the rRNA structure together. The combined cluster of proteins S8, S12 and S17 appears to hold together the shoulder and platform of the 30S subunit. This Nitratidesulfovibrio vulgaris (strain ATCC 29579 / DSM 644 / CCUG 34227 / NCIMB 8303 / VKM B-1760 / Hildenborough) (Desulfovibrio vulgaris) protein is Small ribosomal subunit protein uS12.